Here is a 238-residue protein sequence, read N- to C-terminus: Small ribosomal subunit protein uS2c (238 aa).

This sequence belongs to the universal ribosomal protein uS2 family.

The protein resides in the plastid. Its subcellular location is the chloroplast. This is Small ribosomal subunit protein uS2c (rps2) from Oltmannsiellopsis viridis (Marine flagellate).